The primary structure comprises 57 residues: uncharacterized protein (57 aa).

Positions 9–45 form a coiled coil; sequence NWQEEIRKIIIERVRREAKKRLLEETRKLRMEMKSSK.

This is an uncharacterized protein from Archaeoglobus fulgidus (strain ATCC 49558 / DSM 4304 / JCM 9628 / NBRC 100126 / VC-16).